We begin with the raw amino-acid sequence, 123 residues long: Small ribosomal subunit protein uS12c (123 aa).

The protein belongs to the universal ribosomal protein uS12 family. In terms of assembly, part of the 30S ribosomal subunit.

It localises to the plastid. It is found in the chloroplast. With S4 and S5 plays an important role in translational accuracy. Located at the interface of the 30S and 50S subunits. This Pinus thunbergii (Japanese black pine) protein is Small ribosomal subunit protein uS12c (rps12).